Consider the following 445-residue polypeptide: Histidinol dehydrogenase (445 aa).

NAD(+)-binding residues include Tyr136, Gln200, and Asn228. The substrate site is built by Thr251, Gln273, and His276. Zn(2+) is bound by residues Gln273 and His276. Residues Glu342 and His343 each act as proton acceptor in the active site. Residues His343, Asp376, Glu430, and His435 each contribute to the substrate site. Residue Asp376 participates in Zn(2+) binding. His435 lines the Zn(2+) pocket.

It belongs to the histidinol dehydrogenase family. The cofactor is Zn(2+).

It catalyses the reaction L-histidinol + 2 NAD(+) + H2O = L-histidine + 2 NADH + 3 H(+). It participates in amino-acid biosynthesis; L-histidine biosynthesis; L-histidine from 5-phospho-alpha-D-ribose 1-diphosphate: step 9/9. Catalyzes the sequential NAD-dependent oxidations of L-histidinol to L-histidinaldehyde and then to L-histidine. The sequence is that of Histidinol dehydrogenase (hisD) from Mycolicibacterium smegmatis (Mycobacterium smegmatis).